A 311-amino-acid chain; its full sequence is Coproporphyrin III ferrochelatase 1 (311 aa).

Residues tyrosine 12, arginine 29, arginine 45–tyrosine 46, serine 53, and tyrosine 124 contribute to the Fe-coproporphyrin III site. Fe(2+) contacts are provided by histidine 182 and glutamate 263.

It belongs to the ferrochelatase family.

The protein resides in the cytoplasm. The catalysed reaction is Fe-coproporphyrin III + 2 H(+) = coproporphyrin III + Fe(2+). It functions in the pathway porphyrin-containing compound metabolism; protoheme biosynthesis. Functionally, involved in coproporphyrin-dependent heme b biosynthesis. Catalyzes the insertion of ferrous iron into coproporphyrin III to form Fe-coproporphyrin III. This chain is Coproporphyrin III ferrochelatase 1, found in Bacillus anthracis.